The sequence spans 92 residues: Small ribosomal subunit protein uS19c (92 aa).

It belongs to the universal ribosomal protein uS19 family.

It localises to the plastid. Its subcellular location is the chloroplast. Its function is as follows. Protein S19 forms a complex with S13 that binds strongly to the 16S ribosomal RNA. This chain is Small ribosomal subunit protein uS19c, found in Gracilaria tenuistipitata var. liui (Red alga).